The following is a 185-amino-acid chain: Urease accessory protein UreE (185 aa).

The tract at residues 153–185 (LRANSAQGHGHSHSHSHDHHGYHHHGDGHWHKH) is disordered. Over residues 162–175 (GHSHSHSHDHHGYH) the composition is skewed to basic residues. Positions 176–185 (HHGDGHWHKH) are enriched in basic and acidic residues.

It belongs to the UreE family.

The protein resides in the cytoplasm. Its function is as follows. Involved in urease metallocenter assembly. Binds nickel. Probably functions as a nickel donor during metallocenter assembly. The sequence is that of Urease accessory protein UreE from Haemophilus influenzae (strain 86-028NP).